The following is a 216-amino-acid chain: Ribonuclease HII (216 aa).

Residues 28 to 216 (ACIAGIDEAG…GVKEYVRSEE (189 aa)) form the RNase H type-2 domain. A divalent metal cation-binding residues include D34, E35, and D126.

It belongs to the RNase HII family. The cofactor is Mn(2+). Mg(2+) is required as a cofactor.

The protein resides in the cytoplasm. The catalysed reaction is Endonucleolytic cleavage to 5'-phosphomonoester.. In terms of biological role, endonuclease that specifically degrades the RNA of RNA-DNA hybrids. This Geotalea uraniireducens (strain Rf4) (Geobacter uraniireducens) protein is Ribonuclease HII.